Consider the following 68-residue polypeptide: DNA-directed RNA polymerase subunit omega (68 aa).

The protein belongs to the RNA polymerase subunit omega family. As to quaternary structure, the RNAP catalytic core consists of 2 alpha, 1 beta, 1 beta' and 1 omega subunit. When a sigma factor is associated with the core the holoenzyme is formed, which can initiate transcription.

It catalyses the reaction RNA(n) + a ribonucleoside 5'-triphosphate = RNA(n+1) + diphosphate. Its function is as follows. Promotes RNA polymerase assembly. Latches the N- and C-terminal regions of the beta' subunit thereby facilitating its interaction with the beta and alpha subunits. The sequence is that of DNA-directed RNA polymerase subunit omega from Geobacter sp. (strain M21).